The chain runs to 504 residues: MWIFYFPAVISVLIVSLYFYFTRTFNYWKKRNVRGPEPTVFFGNLKDSALPRKNMGVVMEELYNMFPEEKVIGIYRMTSPCLLVRDLEVIKHIMIKDFEVFSDRGVEFSKEGLGSNLFHADGETWRALRNRFTPIFTSGKPKNMFYLMHEGADNFIDHVSAECEKNQEFEVHSLLQTYTMSTIAACAFGISYDSIGDKVKALDIVDKIISEPSYAIELDMMYPGLLSKLNLSIFPTAVKNFFKSLVDNIVAQRNGKPSGRNDFMDLILELRQLGEVTSNKYGSSASSLEITDEVICAQAFVFYIAGYETSATTMAYMIYQLALSPDIQNKLIAEVDEVLKANDGKVTYDTVKEMKYMNKAFDETLRMYSIVEPLQRKATRDYKIPGTDVVIEKDTIVLISPRGIHYDPKYYDNPKQFNPDRFDAEEVGKRHPCAYLPFGLGQRNCIGMRFGRLQSLLCITKILSKFRIEPSKNTDRNLQVEPHRGLIGPKGGIRVNVVPRKLVS.

Cysteine 445 contributes to the heme binding site.

Belongs to the cytochrome P450 family. The cofactor is heme.

It is found in the endoplasmic reticulum membrane. The protein localises to the microsome membrane. It catalyses the reaction an organic molecule + reduced [NADPH--hemoprotein reductase] + O2 = an alcohol + oxidized [NADPH--hemoprotein reductase] + H2O + H(+). The chain is Cytochrome P450 6B6 (CYP6B6) from Helicoverpa armigera (Cotton bollworm).